We begin with the raw amino-acid sequence, 419 residues long: GTPase Obg (419 aa).

One can recognise an Obg domain in the interval 1 to 158; it reads MHFVDEAFNE…FKIKTELKVL (158 aa). Residues 159–324 form the OBG-type G domain; that stretch reads ADIGLLGFPS…LKYKMSSFLQ (166 aa). Residues 165–172, 190–194, 211–214, 278–281, and 305–307 contribute to the GTP site; these read GFPSVGKS, FTTIK, DLPG, NKMD, and SLV. Ser172 and Thr192 together coordinate Mg(2+). Residues 342 to 419 form the OCT domain; the sequence is TLTDNLKTIS…KICDRLFDFL (78 aa).

This sequence belongs to the TRAFAC class OBG-HflX-like GTPase superfamily. OBG GTPase family. Monomer. It depends on Mg(2+) as a cofactor.

The protein localises to the cytoplasm. In terms of biological role, an essential GTPase which binds GTP, GDP and possibly (p)ppGpp with moderate affinity, with high nucleotide exchange rates and a fairly low GTP hydrolysis rate. Plays a role in control of the cell cycle, stress response, ribosome biogenesis and in those bacteria that undergo differentiation, in morphogenesis control. In Aster yellows witches'-broom phytoplasma (strain AYWB), this protein is GTPase Obg.